The sequence spans 430 residues: Glutamate-1-semialdehyde 2,1-aminomutase (430 aa).

Lys-267 is subject to N6-(pyridoxal phosphate)lysine.

The protein belongs to the class-III pyridoxal-phosphate-dependent aminotransferase family. HemL subfamily. In terms of assembly, homodimer. The cofactor is pyridoxal 5'-phosphate.

The protein resides in the cytoplasm. The enzyme catalyses (S)-4-amino-5-oxopentanoate = 5-aminolevulinate. Its pathway is porphyrin-containing compound metabolism; protoporphyrin-IX biosynthesis; 5-aminolevulinate from L-glutamyl-tRNA(Glu): step 2/2. The sequence is that of Glutamate-1-semialdehyde 2,1-aminomutase from Lawsonia intracellularis (strain PHE/MN1-00).